Consider the following 562-residue polypeptide: MRSDMIKKGDHQAPARSLLHATGALKSPTDMNKPFVAICNSYIDIVPGHVHLRELADIAKEAIREAGAIPFEFNTIGVDDGIAMGHIGMRYSLPSREIIADAAETVINAHWFDGVFYIPNCDKITPGMILAAMRTNVPAIFCSGGPMKAGLSAHGKALTLSSMFEAVGAFKEGSISKEEFLDMEQNACPTCGSCAGMFTANSMNCLMEVLGLALPYNGTALAVSDQRREMIRQAAFKLVENIKNDLKPRDIVTREAIDDAFALDMAMGGSTNTVLHTLAIANEAGIDYDLERINAIAKRTPYLSKIAPSSSYSMHDVHEAGGVPAIINELMKKDGTLHPDRITVTGKTLRENNEGKEIKNFDVIHPLDAPYDAQGGLSILFGNIAPKGAVIKVGGVDPSIKTFTGKAICFNSHDEAVEAIDNRTVRAGHVVVIRYEGPKGGPGMPEMLAPTSSIVGRGLGKDVALITDGRFSGATRGIAVGHISPEAASGGPIALIEDGDEITIDLTNRTLNVNQPEDVLARRRESLTPFKAKVKTGYLARYTALVTSANTGGVMQVPENLI.

Residue Asp-80 participates in Mg(2+) binding. Cys-121 provides a ligand contact to [2Fe-2S] cluster. Asp-122 and Lys-123 together coordinate Mg(2+). Position 123 is an N6-carboxylysine (Lys-123). Cys-194 lines the [2Fe-2S] cluster pocket. Glu-446 lines the Mg(2+) pocket. Ser-472 functions as the Proton acceptor in the catalytic mechanism.

The protein belongs to the IlvD/Edd family. As to quaternary structure, homodimer. Requires [2Fe-2S] cluster as cofactor. It depends on Mg(2+) as a cofactor.

It catalyses the reaction (2R)-2,3-dihydroxy-3-methylbutanoate = 3-methyl-2-oxobutanoate + H2O. The enzyme catalyses (2R,3R)-2,3-dihydroxy-3-methylpentanoate = (S)-3-methyl-2-oxopentanoate + H2O. It functions in the pathway amino-acid biosynthesis; L-isoleucine biosynthesis; L-isoleucine from 2-oxobutanoate: step 3/4. The protein operates within amino-acid biosynthesis; L-valine biosynthesis; L-valine from pyruvate: step 3/4. Its function is as follows. Functions in the biosynthesis of branched-chain amino acids. Catalyzes the dehydration of (2R,3R)-2,3-dihydroxy-3-methylpentanoate (2,3-dihydroxy-3-methylvalerate) into 2-oxo-3-methylpentanoate (2-oxo-3-methylvalerate) and of (2R)-2,3-dihydroxy-3-methylbutanoate (2,3-dihydroxyisovalerate) into 2-oxo-3-methylbutanoate (2-oxoisovalerate), the penultimate precursor to L-isoleucine and L-valine, respectively. The protein is Dihydroxy-acid dehydratase of Staphylococcus aureus (strain Mu50 / ATCC 700699).